A 172-amino-acid polypeptide reads, in one-letter code: Small ribosomal subunit protein uS5 (172 aa).

Residues 13-76 (LVEKMISVNR…EQARHNMMKI (64 aa)) form the S5 DRBM domain.

The protein belongs to the universal ribosomal protein uS5 family. In terms of assembly, part of the 30S ribosomal subunit. Contacts proteins S4 and S8.

Its function is as follows. With S4 and S12 plays an important role in translational accuracy. Located at the back of the 30S subunit body where it stabilizes the conformation of the head with respect to the body. The protein is Small ribosomal subunit protein uS5 of Chromobacterium violaceum (strain ATCC 12472 / DSM 30191 / JCM 1249 / CCUG 213 / NBRC 12614 / NCIMB 9131 / NCTC 9757 / MK).